Consider the following 379-residue polypeptide: Tryptophan--tRNA ligase, mitochondrial (379 aa).

Residues Q42 and 48 to 51 (HLGN) each bind ATP. Residues 43–51 (PTGCFHLGN) carry the 'HIGH' region motif. D184 provides a ligand contact to L-tryptophan. Residues 196-198 (GDD), V235, 244-248 (KMSKS), and K247 each bind ATP. The 'KMSKS' region signature appears at 244-248 (KMSKS).

This sequence belongs to the class-I aminoacyl-tRNA synthetase family. Homodimer.

Its subcellular location is the mitochondrion matrix. It carries out the reaction tRNA(Trp) + L-tryptophan + ATP = L-tryptophyl-tRNA(Trp) + AMP + diphosphate + H(+). Functionally, mitochondrial aminoacyl-tRNA synthetase that catalyzes the attachment of tryptophan to tRNA(Trp). The chain is Tryptophan--tRNA ligase, mitochondrial (MSW1) from Saccharomyces cerevisiae (strain ATCC 204508 / S288c) (Baker's yeast).